The chain runs to 523 residues: Protein tweety homolog 3 (523 aa).

Residues 1-42 (MAGVSYAAPWWVSLLHRLPHFDLSWEATSSQFRPEDTDYQQA) are Extracellular-facing. A helical membrane pass occupies residues 43–63 (LLLLGAAALACLALDLLFLLF). The Cytoplasmic segment spans residues 64-86 (YSFWLCCRRRKSEEHLDADCCCT). The helical transmembrane segment at 87-107 (AWCVIIATLVCSAGIAVGFYG) threads the bilayer. At 108–211 (NGETSDGIHR…VDLYDWYRWL (104 aa)) the chain is on the extracellular side. Positions 110 and 113 each coordinate Ca(2+). 2 N-linked (GlcNAc...) asparagine glycosylation sites follow: N126 and N144. The chain crosses the membrane as a helical span at residues 212–232 (GYLGLLLLDVIICLLVLVGLI). Residues 233–236 (RSSK) lie on the Cytoplasmic side of the membrane. Residues 237–257 (GILVGVCLLGVLALVISWGAL) form a helical membrane-spanning segment. Residues 258–386 (GLELAVSVGS…LTGFCYDGVE (129 aa)) lie on the Extracellular side of the membrane. 2 disulfide bridges follow: C271–C381 and C299–C366. N351 carries an N-linked (GlcNAc...) asparagine glycan. Residues 387–407 (GLIYLALFSFVTALMFSSIVC) form a helical membrane-spanning segment. Topologically, residues 408–523 (SVPHTWQQKR…QPRPDSSGSH (116 aa)) are cytoplasmic. Disordered stretches follow at residues 413–435 (WQQK…RQAH) and 482–523 (QNPR…SGSH). S496 carries the post-translational modification Phosphoserine. A PY-motif; mediates interaction with NEDD4L motif is present at residues 498–501 (PPSY). The segment covering 501–523 (YTSSMRAKYLATSQPRPDSSGSH) has biased composition (polar residues). Residues S504 and S522 each carry the phosphoserine modification.

It belongs to the tweety family. In terms of assembly, homotetramer; disulfide-linked. Homodimer. Interacts with NEDD4L. Ubiquitinated by NEDD4L. In terms of processing, N-Glycosylated. Contains high-mannose, hybrid and complex oligosaccharides. As to expression, expressed in excitable tissues. Expressed in the brain, heart, skeletal muscle, colon, spleen, kidney and peripheral blood leukocytes.

The protein resides in the cell membrane. It catalyses the reaction chloride(in) = chloride(out). The catalysed reaction is L-glutamate(out) = L-glutamate(in). In terms of biological role, calcium-independent, swelling-dependent volume-regulated anion channel (VRAC-swell) which plays a pivotal role in the process of regulatory volume decrease (RVD) in the brain through the efflux of anions like chloride and organic osmolytes like glutamate. Probable large-conductance Ca(2+)-activated chloride channel. The protein is Protein tweety homolog 3 (TTYH3) of Homo sapiens (Human).